The chain runs to 512 residues: GMP synthase [glutamine-hydrolyzing] (512 aa).

The 191-residue stretch at 7–197 (TIIVLDFGSQ…VFGVCGCSEG (191 aa)) folds into the Glutamine amidotransferase type-1 domain. The active-site Nucleophile is Cys-84. Active-site residues include His-171 and Glu-173. One can recognise a GMPS ATP-PPase domain in the interval 198–387 (WNMENFIEVE…LGIPDEIVWR (190 aa)). Residue 225–231 (SGGVDSS) participates in ATP binding.

In terms of assembly, homodimer.

It catalyses the reaction XMP + L-glutamine + ATP + H2O = GMP + L-glutamate + AMP + diphosphate + 2 H(+). It functions in the pathway purine metabolism; GMP biosynthesis; GMP from XMP (L-Gln route): step 1/1. Functionally, catalyzes the synthesis of GMP from XMP. This is GMP synthase [glutamine-hydrolyzing] from Bacillus cytotoxicus (strain DSM 22905 / CIP 110041 / 391-98 / NVH 391-98).